We begin with the raw amino-acid sequence, 408 residues long: RNA-splicing ligase RtcB (408 aa).

Residues Asp75, Cys78, His168, His185, and His281 each contribute to the Mn(2+) site. Asn167–Glu171 lines the GMP pocket. GMP contacts are provided by residues His281–Asn282, Pro313–Met316, Ser320, His337–Gly340, and Lys407. The GMP-histidine intermediate role is filled by His337.

It belongs to the RtcB family. As to quaternary structure, monomer. Mn(2+) is required as a cofactor.

It catalyses the reaction a 3'-end 3'-phospho-ribonucleotide-RNA + a 5'-end dephospho-ribonucleoside-RNA + GTP = a ribonucleotidyl-ribonucleotide-RNA + GMP + diphosphate. The catalysed reaction is a 3'-end 2',3'-cyclophospho-ribonucleotide-RNA + a 5'-end dephospho-ribonucleoside-RNA + GTP + H2O = a ribonucleotidyl-ribonucleotide-RNA + GMP + diphosphate + H(+). Functionally, GTP-dependent RNA ligase that is involved in RNA repair. Joins RNA with 2',3'-cyclic-phosphate or 3'-phosphate ends to RNA with 5'-hydroxy ends. Also acts as a DNA ligase in case of DNA damage by splicing 'dirty' DNA breaks, characterized by 3'-phosphate (or cyclic-phosphate) and 5'-hydroxy ends that cannot be sealed by classical DNA ligases. Repairs tRNA cleaved by colicins D or E5, does not repair damaged 16S rRNA. Able to catalyze tRNA splicing in vivo in yeast, but bacteria are not known to splice tRNA. The protein is RNA-splicing ligase RtcB of Escherichia coli (strain K12).